The primary structure comprises 303 residues: Ribosomal RNA small subunit methyltransferase H (303 aa).

S-adenosyl-L-methionine is bound by residues 33 to 35 (GGH), aspartate 52, phenylalanine 78, aspartate 99, and glutamine 106.

Belongs to the methyltransferase superfamily. RsmH family.

The protein resides in the cytoplasm. The enzyme catalyses cytidine(1402) in 16S rRNA + S-adenosyl-L-methionine = N(4)-methylcytidine(1402) in 16S rRNA + S-adenosyl-L-homocysteine + H(+). In terms of biological role, specifically methylates the N4 position of cytidine in position 1402 (C1402) of 16S rRNA. This is Ribosomal RNA small subunit methyltransferase H from Phytoplasma australiense.